The following is a 247-amino-acid chain: Homeobox protein BarH-like 1b (247 aa).

Disordered stretches follow at residues 118-138 and 197-247; these read RGKLEPGGPETGSKAKKGRRS and GGGL…SQEE. The homeobox DNA-binding region spans 135-194; the sequence is GRRSRTVFTELQLMGLEKRFEKQKYLSTPDRIDLAESLGLSQLQVKTWYQNRRMKWKKIV. The segment covering 223-234 has biased composition (basic and acidic residues); that stretch reads EQERARDAEKPP.

The protein belongs to the BAR homeobox family. In terms of assembly, interacts with serum response factor (SRF). As to expression, expressed in smooth muscle cells of the upper digestive organs and their attached arteries and to craniofacial structures.

It is found in the nucleus. Transcription factor which is involved with the serum response factor (SRF) in the smooth muscle cell-specific transcription of the beta-tropomyosin gene in the upper digestive organs and their attached arteries. In Gallus gallus (Chicken), this protein is Homeobox protein BarH-like 1b (BARX1B).